We begin with the raw amino-acid sequence, 426 residues long: Probable indole-3-pyruvate monooxygenase YUCCA8 (426 aa).

29-34 contributes to the FAD binding site; it reads GAGPSG. 199-204 serves as a coordination point for NADP(+); it reads GCGNSG.

Belongs to the FMO family. FAD is required as a cofactor. In terms of tissue distribution, expressed in root tips and in hydathodes. Expressed in root vasculature and quiescent center, but not in the meristematic zone of the root tip.

It catalyses the reaction indole-3-pyruvate + NADPH + O2 + H(+) = (indol-3-yl)acetate + CO2 + NADP(+) + H2O. It functions in the pathway plant hormone metabolism; auxin biosynthesis. In terms of biological role, involved in auxin biosynthesis. Belongs to the set of redundant YUCCA genes probably responsible for auxin biosynthesis in roots. The protein is Probable indole-3-pyruvate monooxygenase YUCCA8 (YUC8) of Arabidopsis thaliana (Mouse-ear cress).